A 126-amino-acid chain; its full sequence is Large ribosomal subunit protein eL18 (126 aa).

Belongs to the eukaryotic ribosomal protein eL18 family.

In Methanosarcina mazei (strain ATCC BAA-159 / DSM 3647 / Goe1 / Go1 / JCM 11833 / OCM 88) (Methanosarcina frisia), this protein is Large ribosomal subunit protein eL18.